Here is a 334-residue protein sequence, read N- to C-terminus: Fructose-1,6-bisphosphatase class 1 (334 aa).

Glu90, Asp113, Leu115, and Asp116 together coordinate Mg(2+). Residues 116-119 (DGSS), Asn209, Tyr242, and Lys272 contribute to the substrate site. Glu278 provides a ligand contact to Mg(2+).

This sequence belongs to the FBPase class 1 family. As to quaternary structure, homotetramer. Mg(2+) is required as a cofactor.

The protein resides in the cytoplasm. It catalyses the reaction beta-D-fructose 1,6-bisphosphate + H2O = beta-D-fructose 6-phosphate + phosphate. It functions in the pathway carbohydrate biosynthesis; gluconeogenesis. The chain is Fructose-1,6-bisphosphatase class 1 from Actinobacillus pleuropneumoniae serotype 5b (strain L20).